The primary structure comprises 144 residues: Transmembrane protein 170A (144 aa).

Over 1 to 50 (MEREGSGGSGGSAGLLQQILSLKVVPRVGNGTLCPNSTSLCSFPEMWYGV) the chain is Lumenal. 2 N-linked (GlcNAc...) asparagine glycosylation sites follow: asparagine 30 and asparagine 36. Residues 51-71 (FLWALVSSLFFHVPAGLLALF) form a helical membrane-spanning segment. Topologically, residues 72 to 85 (TLRHHKYGRFMSVS) are cytoplasmic. A helical membrane pass occupies residues 86–106 (ILLMGIVGPITAGILTSAAIA). Residues 107–116 (GVYRAAGKEM) are Lumenal-facing. A helical transmembrane segment spans residues 117 to 137 (IPFEALTLGTGQTFCVLVVSF). At 138–144 (LRILATL) the chain is on the cytoplasmic side.

It belongs to the TMEM170 family. In terms of assembly, interacts with RTN4.

It is found in the endoplasmic reticulum membrane. The protein resides in the nucleus envelope. Acts as a regulator of endoplasmic reticulum (ER) and nuclear envelope (NE) morphogenesis. Affects the ratio between tubular ER and ER sheets by promoting sheet formation at the expense of tubules. Influences NE expansion, nuclear pore complex formation and proper localization of inner nuclear membrane proteins. This is Transmembrane protein 170A (TMEM170A) from Homo sapiens (Human).